Reading from the N-terminus, the 247-residue chain is MVRLASLAVLGSVIATASAHTRVWGVYVNGEYQGDGIGQYVRSPPTNNPVKDLTSAAMKCNVNDAREFEVPKRVSVAGGDELSFEWYHDYRNDDIIASSHHGPIQVYMSGDDGATWTKIASDGYDTGSSTWAVDRLISAGGKHSVIIPDVPAGDYLLRAEIVALHEADVAYDQNPIRGAQNYPSCTQITVTSNGSDALPADGVKFPGAYTDSTPGIIFNIWPPNAQDPATYQVPGPAVWDKAPGGSV.

A signal peptide spans Met1–Ala19. The Cu(2+) site is built by His20 and His100. A disulfide bridge connects residues Cys60 and Cys185. His165 is an O2 binding site. Tyr182 is a binding site for Cu(2+). The N-linked (GlcNAc...) asparagine glycan is linked to Asn193.

It belongs to the polysaccharide monooxygenase AA9 family. Requires Cu(2+) as cofactor.

Its subcellular location is the secreted. The catalysed reaction is [(1-&gt;4)-beta-D-glucosyl]n+m + reduced acceptor + O2 = 4-dehydro-beta-D-glucosyl-[(1-&gt;4)-beta-D-glucosyl]n-1 + [(1-&gt;4)-beta-D-glucosyl]m + acceptor + H2O.. In terms of biological role, lytic polysaccharide monooxygenase (LPMO) that depolymerizes polysaccharides via the oxidation of scissile alpha- or beta-(1-4)-glycosidic bonds, yielding C4 oxidation products. Catalysis by LPMOs requires the reduction of the active-site copper from Cu(II) to Cu(I) by a reducing agent and H(2)O(2) or O(2) as a cosubstrate. Shows C4-oxidative cleavage of amorphous cellulose and soluble cello-oligosaccharides. Also active on xyloglucan, mixed-linkage beta-glucan, and glucomannan. Not active on crystalline forms of cellulose. Has higher affinity for linear substrates compared to branched substrates. Catalyzes a fast and specific peroxygenase reaction that is at least two orders of magnitude faster than the apparent monooxygenase reaction. This is AA9 family lytic polysaccharide monooxygenase A from Schizophyllum commune (strain H4-8 / FGSC 9210) (Split gill fungus).